Here is a 904-residue protein sequence, read N- to C-terminus: UPF0182 protein CKL_0015 (904 aa).

7 consecutive transmembrane segments (helical) span residues 9–29 (SLIV…DFII), 47–67 (LIAI…SIVL), 96–116 (IFII…AATY), 157–177 (ILSL…TLSV), 208–228 (LAVL…LKCI), 253–273 (YKII…SILV), and 279–299 (IIVS…SYTV).

It belongs to the UPF0182 family.

Its subcellular location is the cell membrane. The polypeptide is UPF0182 protein CKL_0015 (Clostridium kluyveri (strain ATCC 8527 / DSM 555 / NBRC 12016 / NCIMB 10680 / K1)).